Here is a 404-residue protein sequence, read N- to C-terminus: MSTFPAPVLGTPLSPTATRVMLLGAGELGKEVVIALQRLGVEVIAVDRYADAPGHQVAHRAHVVSMTDPQALRQVIEQERPHVVVPEIEAIATDLLVALEDEGAVHVTPTARAAHLTMNREGIRRLAAETLGLPTSPYRFVDTEQALREAIDGGIGYPCVIKPVMSSSGKGQSIIRSADDIAAAWRYAQEGGRVGAGRVIVEGFIEFDYEITLLTVRARGADGQIVTQFCEPIGHRQVDGDYVESWQPHPMSPVALQRSREIALAVTGDLGGLGIFGVELFVAGDQVWFSEVSPRPHDTGMVTLISQVQNEFELHARALLGLPVDTRLRQPGASSVIYGGVDARGVAFEGVAQALAEPGTDIRLFGKPESYAKRRMGVGLAVADDVDQARAKAARVSQAVRVRA.

Residues 27-28 (EL) and Glu-87 each bind N(1)-(5-phospho-beta-D-ribosyl)glycinamide. ATP-binding positions include Arg-120, Lys-162, 167-172 (SSGKGQ), 202-205 (EGFI), and Glu-210. The region spanning 125-320 (RLAAETLGLP…EFELHARALL (196 aa)) is the ATP-grasp domain. Residues Glu-279 and Glu-291 each coordinate Mg(2+). N(1)-(5-phospho-beta-D-ribosyl)glycinamide contacts are provided by residues Asp-298, Lys-367, and 374-375 (RR).

The protein belongs to the PurK/PurT family. In terms of assembly, homodimer.

The catalysed reaction is N(1)-(5-phospho-beta-D-ribosyl)glycinamide + formate + ATP = N(2)-formyl-N(1)-(5-phospho-beta-D-ribosyl)glycinamide + ADP + phosphate + H(+). It participates in purine metabolism; IMP biosynthesis via de novo pathway; N(2)-formyl-N(1)-(5-phospho-D-ribosyl)glycinamide from N(1)-(5-phospho-D-ribosyl)glycinamide (formate route): step 1/1. In terms of biological role, involved in the de novo purine biosynthesis. Catalyzes the transfer of formate to 5-phospho-ribosyl-glycinamide (GAR), producing 5-phospho-ribosyl-N-formylglycinamide (FGAR). Formate is provided by PurU via hydrolysis of 10-formyl-tetrahydrofolate. In Bordetella pertussis (strain Tohama I / ATCC BAA-589 / NCTC 13251), this protein is Formate-dependent phosphoribosylglycinamide formyltransferase.